Consider the following 227-residue polypeptide: Terpene cyclase ltmB (227 aa).

Helical transmembrane passes span 20–40, 51–71, 76–96, 113–133, 135–155, 173–195, and 206–226; these read LAET…VLMI, MALI…IIYP, VELA…TSAA, AGLI…ALAM, IGPA…LSIG, LWSS…WRYW, and LILW…VCLL.

It belongs to the paxB family.

It localises to the membrane. It functions in the pathway secondary metabolite biosynthesis. Terpene cyclase; part of the gene cluster that mediates the biosynthesis of lolitrems, indole-diterpene mycotoxins that are potent tremorgens in mammals, and are synthesized by clavicipitaceous fungal endophytes in association with their grass hosts. The geranylgeranyl diphosphate (GGPP) synthase ltmG is proposed to catalyze the first step in lolitrem biosynthesis. LtmG catalyzes a series of iterative condensations of isopentenyl diphosphate (IPP) with dimethylallyl diphosphate (DMAPP), geranyl diphosphate (GPP), and farnesyl diphosphate (FPP), to form GGPP. GGPP then condenses with indole-3-glycerol phosphate to form 3-geranylgeranylindole, an acyclic intermediate, to be incorporated into paxilline. Either ltmG or ltmC could be responsible for this step, as both are putative prenyl transferases. The FAD-dependent monooxygenase ltmM then catalyzes the epoxidation of the two terminal alkenes of the geranylgeranyl moiety, which is subsequently cyclized by ltmB, to paspaline. The cytochrome P450 monooxygenases ltmQ and ltmP can sequentially oxidize paspaline to terpendole E and terpendole F. Alternatively, ltmP converts paspaline to an intermediate which is oxidized by ltmQ to terpendole F. LtmF, ltmK, ltmE and ltmJ appear to be unique to the epichloe endophytes. The prenyltransferase ltmF is involved in the 27-hydroxyl-O-prenylation. The cytochrome P450 monooxygenase ltmK is required for the oxidative acetal ring formation. The multi-functional prenyltransferase ltmE is required for C20- and C21-prenylations of the indole ring of paspalanes and acts together with the cytochrome P450 monooxygenase ltmJ to yield lolitremanes by multiple oxidations and ring closures. The stereoisomer pairs of lolitriol and lolitrem N or lolitrem B and lolitrem F may be attributed to variations in the way in which ring closure can occur under the action of ltmJ. While the major product of this pathway is lolitrem B, the prenyl transferases and cytochrome P450 monooxygenases identified in this pathway have a remarkable versatility in their regio- and stereo-specificities to generate a diverse range of metabolites that are products of a metabolic grid rather than a linear pathway. The protein is Terpene cyclase ltmB of Epichloe festucae var. lolii (Neotyphodium lolii).